The following is a 339-amino-acid chain: 5-dehydro-2-deoxygluconokinase (339 aa).

The protein belongs to the carbohydrate kinase PfkB family.

The catalysed reaction is 5-dehydro-2-deoxy-D-gluconate + ATP = 6-phospho-5-dehydro-2-deoxy-D-gluconate + ADP + H(+). The protein operates within polyol metabolism; myo-inositol degradation into acetyl-CoA; acetyl-CoA from myo-inositol: step 5/7. Functionally, catalyzes the phosphorylation of 5-dehydro-2-deoxy-D-gluconate (2-deoxy-5-keto-D-gluconate or DKG) to 6-phospho-5-dehydro-2-deoxy-D-gluconate (DKGP). The protein is 5-dehydro-2-deoxygluconokinase of Clostridium beijerinckii (strain ATCC 51743 / NCIMB 8052) (Clostridium acetobutylicum).